The sequence spans 604 residues: ERAD-associated E3 ubiquitin-protein ligase component HRD3B (604 aa).

A signal peptide spans 1–25; sequence MRVSGQSIIAISLFTLSLYIHRVQA. The segment at 48–69 is disordered; it reads ESSDFDEFGESEPKSEEELDPG. Residues asparagine 78 and asparagine 105 are each glycosylated (N-linked (GlcNAc...) asparagine). Sel1-like repeat units follow at residues 125–160, 244–274, 279–307, 311–344, 346–380, 464–492, and 498–528; these read PHAQ…AGGN, VAMH…FSKA, LGYL…AANN, SGHY…ANAG, PKAF…AERG, AALL…YMYA, and AQAM…YDQA. Asparagine 293 carries N-linked (GlcNAc...) asparagine glycosylation.

This sequence belongs to the sel-1 family.

Functionally, may be involved in the endoplasmic reticulum (ER) quality control system called ER-associated degradation (ERAD). This chain is ERAD-associated E3 ubiquitin-protein ligase component HRD3B, found in Arabidopsis thaliana (Mouse-ear cress).